Here is a 298-residue protein sequence, read N- to C-terminus: MPPPFVVTLTTSAQNNLRDQLKEKNFIFSQPQNTVFQARSNTVTCTLYPSGKLVIQGKGSEEFIEFFLEPEILHTFTHARVEQDLRPRLGVDESGKGDFFGPLCIAAVYASNAEILKKLYENKVQDSKNLKDTKIASLARIIRSLCVCDVIILYPEKYNELYGKFQNLNTLLAWAHATVINNLAPKPAGDVFAISDQFAASEYTLLKALQKKETDITLIQKPRAEQDVVVAAASILARDAFVQSIQKLEEQYQVQLPKGAGFNVKAAGREIAKQRGKELLAKISKTHFKTFDEICSGK.

The RNase H type-2 domain occupies 86 to 298; that stretch reads RPRLGVDESG…KTFDEICSGK (213 aa). Positions 92, 93, and 196 each coordinate a divalent metal cation.

This sequence belongs to the RNase HII family. RnhC subfamily. The cofactor is Mn(2+). Requires Mg(2+) as cofactor.

The protein localises to the cytoplasm. It catalyses the reaction Endonucleolytic cleavage to 5'-phosphomonoester.. Endonuclease that specifically degrades the RNA of RNA-DNA hybrids. This chain is Ribonuclease HIII (rnhC), found in Chlamydia pneumoniae (Chlamydophila pneumoniae).